The chain runs to 210 residues: Probable membrane protein MT1774 (210 aa).

The next 2 membrane-spanning stretches (helical) occupy residues 43–63 and 165–185; these read AVVM…AAAA and ALAA…LLAL.

It is found in the cell membrane. This Mycobacterium tuberculosis (strain CDC 1551 / Oshkosh) protein is Probable membrane protein MT1774.